We begin with the raw amino-acid sequence, 722 residues long: Glycine--tRNA ligase beta subunit (722 aa).

Belongs to the class-II aminoacyl-tRNA synthetase family. As to quaternary structure, tetramer of two alpha and two beta subunits.

Its subcellular location is the cytoplasm. It carries out the reaction tRNA(Gly) + glycine + ATP = glycyl-tRNA(Gly) + AMP + diphosphate. This Xylella fastidiosa (strain 9a5c) protein is Glycine--tRNA ligase beta subunit (glyS).